Here is a 331-residue protein sequence, read N- to C-terminus: Ketol-acid reductoisomerase (NADP(+)) (331 aa).

The region spanning 2–182 is the KARI N-terminal Rossmann domain; the sequence is AKMYYDKDAD…GGTRAGVIET (181 aa). Residues 25–28, Ser-51, Ser-53, and 83–86 contribute to the NADP(+) site; these read FGSQ and DEKQ. Residue His-108 is part of the active site. An NADP(+)-binding site is contributed by Gly-134. Residues 183-328 form the KARI C-terminal knotted domain; that stretch reads TFKEETETDL…KGLREMMAWI (146 aa). Asp-191, Glu-195, Glu-227, and Glu-231 together coordinate Mg(2+). Ser-252 lines the substrate pocket.

It belongs to the ketol-acid reductoisomerase family. Mg(2+) is required as a cofactor.

It catalyses the reaction (2R)-2,3-dihydroxy-3-methylbutanoate + NADP(+) = (2S)-2-acetolactate + NADPH + H(+). It carries out the reaction (2R,3R)-2,3-dihydroxy-3-methylpentanoate + NADP(+) = (S)-2-ethyl-2-hydroxy-3-oxobutanoate + NADPH + H(+). The protein operates within amino-acid biosynthesis; L-isoleucine biosynthesis; L-isoleucine from 2-oxobutanoate: step 2/4. It participates in amino-acid biosynthesis; L-valine biosynthesis; L-valine from pyruvate: step 2/4. Its function is as follows. Involved in the biosynthesis of branched-chain amino acids (BCAA). Catalyzes an alkyl-migration followed by a ketol-acid reduction of (S)-2-acetolactate (S2AL) to yield (R)-2,3-dihydroxy-isovalerate. In the isomerase reaction, S2AL is rearranged via a Mg-dependent methyl migration to produce 3-hydroxy-3-methyl-2-ketobutyrate (HMKB). In the reductase reaction, this 2-ketoacid undergoes a metal-dependent reduction by NADPH to yield (R)-2,3-dihydroxy-isovalerate. The sequence is that of Ketol-acid reductoisomerase (NADP(+)) from Thermoanaerobacter sp. (strain X514).